The chain runs to 426 residues: Methylamine dehydrogenase heavy chain (426 aa).

Residues 1–31 form the signal peptide; sequence MASARESTPRYLTLIGATLACSALALGAAQA. Positions 32–64 are disordered; it reads QTEPAEPEAPAETAAADAAGQTEGQRGAAEAAA. The cysteines at positions 221 and 236 are disulfide-linked.

Belongs to the aromatic amine dehydrogenase heavy chain family. In terms of assembly, tetramer of two light and two heavy chains.

It localises to the periplasm. It carries out the reaction 2 oxidized [amicyanin] + methylamine + H2O = 2 reduced [amicyanin] + formaldehyde + NH4(+) + 2 H(+). Its function is as follows. Methylamine dehydrogenase carries out the oxidation of methylamine. Electrons are passed from methylamine dehydrogenase to amicyanin. This is Methylamine dehydrogenase heavy chain (mauB) from Paracoccus versutus (Thiobacillus versutus).